The sequence spans 117 residues: Iron-sulfur cluster insertion protein ErpA (117 aa).

Iron-sulfur cluster is bound by residues cysteine 45, cysteine 109, and cysteine 111.

It belongs to the HesB/IscA family. Homodimer. It depends on iron-sulfur cluster as a cofactor.

Functionally, required for insertion of 4Fe-4S clusters for at least IspG. This Hahella chejuensis (strain KCTC 2396) protein is Iron-sulfur cluster insertion protein ErpA.